Consider the following 173-residue polypeptide: Acireductone dioxygenase (173 aa).

The segment at 1-21 (MKFYYHDNDSSVDQCAPHDSG) is disordered. 4 residues coordinate Fe(2+): H84, H86, E90, and H129. Ni(2+) is bound by residues H84, H86, E90, and H129.

It belongs to the acireductone dioxygenase (ARD) family. It depends on Fe(2+) as a cofactor. Requires Ni(2+) as cofactor.

Its subcellular location is the cytoplasm. It is found in the nucleus. The catalysed reaction is 1,2-dihydroxy-5-(methylsulfanyl)pent-1-en-3-one + O2 = 4-methylsulfanyl-2-oxobutanoate + formate + 2 H(+). The enzyme catalyses 1,2-dihydroxy-5-(methylsulfanyl)pent-1-en-3-one + O2 = 3-(methylsulfanyl)propanoate + CO + formate + 2 H(+). It functions in the pathway amino-acid biosynthesis; L-methionine biosynthesis via salvage pathway; L-methionine from S-methyl-5-thio-alpha-D-ribose 1-phosphate: step 5/6. Functionally, catalyzes 2 different reactions between oxygen and the acireductone 1,2-dihydroxy-3-keto-5-methylthiopentene (DHK-MTPene) depending upon the metal bound in the active site. Fe-containing acireductone dioxygenase (Fe-ARD) produces formate and 2-keto-4-methylthiobutyrate (KMTB), the alpha-ketoacid precursor of methionine in the methionine recycle pathway. Ni-containing acireductone dioxygenase (Ni-ARD) produces methylthiopropionate, carbon monoxide and formate, and does not lie on the methionine recycle pathway. This chain is Acireductone dioxygenase, found in Yarrowia lipolytica (strain CLIB 122 / E 150) (Yeast).